The primary structure comprises 455 residues: Hexokinase-2 (455 aa).

The Hexokinase domain occupies 3-445 (ANFQQAVKKL…SGIGAALCAL (443 aa)). Residues 57 to 195 (TGAETGDFLA…NLPIRIEAVI (139 aa)) are hexokinase small subdomain. Residue 68 to 73 (DFGGTN) participates in ATP binding. Residues 144–145 (SY), 161–162 (TK), and 196–197 (ND) each bind substrate. A hexokinase large subdomain region spans residues 196 to 434 (NDTVGTLVTR…KLISIGIAKD (239 aa)). Thr222 is an ATP binding site. Substrate contacts are provided by Asn225, Glu252, and Glu283. ATP-binding positions include 288–289 (GM), 325–329 (TSVLS), and 400–404 (SLVEH).

This sequence belongs to the hexokinase family. Monomer.

The catalysed reaction is a D-hexose + ATP = a D-hexose 6-phosphate + ADP + H(+). The enzyme catalyses D-mannose + ATP = D-mannose 6-phosphate + ADP + H(+). It carries out the reaction D-fructose + ATP = D-fructose 6-phosphate + ADP + H(+). It catalyses the reaction D-glucose + ATP = D-glucose 6-phosphate + ADP + H(+). The protein operates within carbohydrate metabolism; hexose metabolism. It functions in the pathway carbohydrate degradation; glycolysis; D-glyceraldehyde 3-phosphate and glycerone phosphate from D-glucose: step 1/4. In terms of biological role, catalyzes the phosphorylation of hexose (six-carbon sugars) to hexose 6-phosphate. Phosphorylates D-glucose, D-fructose and D-mannose. Compared to hxk1, has a much higher affinity for D-glucose. Constitutes the initial enzyme of glycolysis by catalyzing the phosphorylation of glucose to D-glucose 6-phosphate. The chain is Hexokinase-2 from Schizosaccharomyces pombe (strain 972 / ATCC 24843) (Fission yeast).